Consider the following 817-residue polypeptide: Tax1-binding protein 1 homolog (817 aa).

Ser124 and Ser138 each carry phosphoserine. Residues 144-628 adopt a coiled-coil conformation; the sequence is TTKAGLLELK…ENQAERKLEG (485 aa). Residues 320–420 form an oligomerization region; the sequence is EEISRLQFSL…ELKLSAVNKD (101 aa). Residues 609 to 627 show a composition bias toward basic and acidic residues; that stretch reads SREKEHKRSVENQAERKLE. A disordered region spans residues 609-685; sequence SREKEHKRSV…ADGAFYPDEI (77 aa). Ser617 bears the Phosphoserine; by IKKA mark. The span at 628–643 shows a compositional bias: polar residues; that stretch reads GQNSQSPHQISQCLKT. Ser633 bears the Phosphoserine mark. A Phosphoserine; by IKKA modification is found at Ser694. The tract at residues 704-742 is disordered; the sequence is SQPARNLSRPDGLEDPEDSKEDEKVPTAPDPPSQHLRGH. UBZ1-type zinc fingers lie at residues 755-781 and 782-808; these read QKKC…VESH and WKVC…VQTH. Cys758, Cys761, His777, His781, Cys785, Cys788, His804, and His808 together coordinate Zn(2+).

Homooligomer. Interacts with TNFAIP3. Interacts with STARD13. Interacts with MYO6. Interacts with TOM1; the interaction is indirect and is mediated by MYO6, which acts as a bridge between TOM1 and TAX1BP1. Interacts with MAVS; this interaction induces MAVS polyubiquitination. Interacts with TNIP1. Interacts with TRAF6; this interaction mediates deubiquitination of TRAF6 and inhibition of NF-kappa-B activation. Interacts with RIPK1; this interaction negatively regulates RIPK1 ubiquitination. Interacts with NBR1. Interacts with TBK1. Interacts with RB1CC1. Interacts with SQSTM1. Interacts with AZI2. Phosphorylated in the C-terminal region by CHUK/IKKA leading to NF-kappa-B signaling down-regulation.

The protein localises to the cytoplasm. Its subcellular location is the mitochondrion. The protein resides in the preautophagosomal structure. It localises to the cytoplasmic vesicle. It is found in the autophagosome. Its function is as follows. Ubiquitin-binding adapter that participates in inflammatory, antiviral and innate immune processes as well as selective autophagy regulation. Plays a key role in the negative regulation of NF-kappa-B and IRF3 signalings by acting as an adapter for the ubiquitin-editing enzyme A20/TNFAIP3 to bind and inactivate its substrates. Disrupts the interactions between the E3 ubiquitin ligase TRAF3 and TBK1/IKBKE to attenuate 'Lys63'-linked polyubiquitination of TBK1 and thereby IFN-beta production. Also recruits A20/TNFAIP3 to ubiquitinated signaling proteins TRAF6 and RIPK1, leading to their deubiquitination and disruption of IL-1 and TNF-induced NF-kappa-B signaling pathways. Inhibits virus-induced apoptosis by inducing the 'Lys-48'-linked polyubiquitination and degradation of MAVS via recruitment of the E3 ligase ITCH, thereby attenuating MAVS-mediated apoptosis signaling. As a macroautophagy/autophagy receptor, facilitates the xenophagic clearance of pathogenic bacteria such as Salmonella typhimurium and Mycobacterium tuberculosis. Upon NBR1 recruitment to the SQSTM1-ubiquitin condensates, acts as the major recruiter of RB1CC1 to these ubiquitin condensates to promote their autophagic degradation. In Bos taurus (Bovine), this protein is Tax1-binding protein 1 homolog (TAX1BP1).